The following is a 146-amino-acid chain: MKLHELKPSEGSRKERNRVGRGIGSGNGKTSGKGHKGQNARSGGGVRPGFEGGQMPLFQRLPKRGFTNINRKDYAVINLDRLNSFDEGTEVTPELLLETGAISKLKAGVKILGNGKLEKKLTVKANKFSASAKEAIEAAGGTAEVI.

Over residues 1–18 (MKLHELKPSEGSRKERNR) the composition is skewed to basic and acidic residues. The disordered stretch occupies residues 1-57 (MKLHELKPSEGSRKERNRVGRGIGSGNGKTSGKGHKGQNARSGGGVRPGFEGGQMPL). Gly residues-rich tracts occupy residues 21–31 (RGIGSGNGKTS) and 42–52 (SGGGVRPGFEG).

It belongs to the universal ribosomal protein uL15 family. In terms of assembly, part of the 50S ribosomal subunit.

Binds to the 23S rRNA. This Bacillus pumilus (strain SAFR-032) protein is Large ribosomal subunit protein uL15.